The sequence spans 340 residues: Glycerol-3-phosphate dehydrogenase [NAD(P)+] (340 aa).

Ser-14, Phe-15, Arg-35, and Lys-108 together coordinate NADPH. Sn-glycerol 3-phosphate is bound by residues Lys-108 and Gly-136. Ala-140 serves as a coordination point for NADPH. Sn-glycerol 3-phosphate contacts are provided by Lys-191, Asp-244, Ser-254, Arg-255, and Asn-256. The active-site Proton acceptor is Lys-191. Arg-255 serves as a coordination point for NADPH. Val-279 and Glu-281 together coordinate NADPH.

It belongs to the NAD-dependent glycerol-3-phosphate dehydrogenase family.

The protein localises to the cytoplasm. It catalyses the reaction sn-glycerol 3-phosphate + NAD(+) = dihydroxyacetone phosphate + NADH + H(+). It carries out the reaction sn-glycerol 3-phosphate + NADP(+) = dihydroxyacetone phosphate + NADPH + H(+). It functions in the pathway membrane lipid metabolism; glycerophospholipid metabolism. Functionally, catalyzes the reduction of the glycolytic intermediate dihydroxyacetone phosphate (DHAP) to sn-glycerol 3-phosphate (G3P), the key precursor for phospholipid synthesis. The protein is Glycerol-3-phosphate dehydrogenase [NAD(P)+] of Azotobacter vinelandii (strain DJ / ATCC BAA-1303).